The primary structure comprises 356 residues: Fructose-1,6-bisphosphatase class 1 1 (356 aa).

Glu-106, Asp-129, Leu-131, and Asp-132 together coordinate Mg(2+). Substrate contacts are provided by residues 132-135 (DGSS), Asn-225, Tyr-258, and Lys-288. A Mg(2+)-binding site is contributed by Glu-294.

This sequence belongs to the FBPase class 1 family. As to quaternary structure, homotetramer. It depends on Mg(2+) as a cofactor.

It localises to the cytoplasm. The enzyme catalyses beta-D-fructose 1,6-bisphosphate + H2O = beta-D-fructose 6-phosphate + phosphate. It functions in the pathway carbohydrate biosynthesis; gluconeogenesis. This Salinibacter ruber (strain DSM 13855 / M31) protein is Fructose-1,6-bisphosphatase class 1 1.